The sequence spans 385 residues: Lipid-A-disaccharide synthase (385 aa).

Belongs to the LpxB family.

The catalysed reaction is a lipid X + a UDP-2-N,3-O-bis[(3R)-3-hydroxyacyl]-alpha-D-glucosamine = a lipid A disaccharide + UDP + H(+). It functions in the pathway bacterial outer membrane biogenesis; LPS lipid A biosynthesis. Its function is as follows. Condensation of UDP-2,3-diacylglucosamine and 2,3-diacylglucosamine-1-phosphate to form lipid A disaccharide, a precursor of lipid A, a phosphorylated glycolipid that anchors the lipopolysaccharide to the outer membrane of the cell. In Rickettsia canadensis (strain McKiel), this protein is Lipid-A-disaccharide synthase.